Here is a 536-residue protein sequence, read N- to C-terminus: Xylulose kinase (536 aa).

Substrate contacts are provided by H99, R170, D280, and N281. ATP is bound by residues W355, 441–442 (GA), and N445.

The protein belongs to the FGGY kinase family. As to quaternary structure, monomer.

The enzyme catalyses D-xylulose + ATP = D-xylulose 5-phosphate + ADP + H(+). Its function is as follows. Phosphorylates D-xylulose to produce D-xylulose 5-phosphate, a molecule that may play an important role in the regulation of glucose metabolism and lipogenesis. The sequence is that of Xylulose kinase (Xylb) from Rattus norvegicus (Rat).